Here is a 319-residue protein sequence, read N- to C-terminus: ATP-dependent 6-phosphofructokinase (319 aa).

Residues glycine 11, 72–73 (RS), and 102–105 (GDGS) contribute to the ATP site. Aspartate 103 contacts Mg(2+). Substrate is bound at residue 126 to 128 (TID). The Proton acceptor role is filled by aspartate 128. Arginine 155 contributes to the ADP binding site. Substrate is bound by residues arginine 163 and 170 to 172 (MGR). 186–188 (GAE) contributes to the ADP binding site. Substrate contacts are provided by residues glutamate 223, arginine 245, and 251–254 (HTQR).

It belongs to the phosphofructokinase type A (PFKA) family. ATP-dependent PFK group I subfamily. Prokaryotic clade 'B1' sub-subfamily. In terms of assembly, homotetramer. It depends on Mg(2+) as a cofactor.

It is found in the cytoplasm. The enzyme catalyses beta-D-fructose 6-phosphate + ATP = beta-D-fructose 1,6-bisphosphate + ADP + H(+). Its pathway is carbohydrate degradation; glycolysis; D-glyceraldehyde 3-phosphate and glycerone phosphate from D-glucose: step 3/4. With respect to regulation, allosterically activated by ADP and other diphosphonucleosides, and allosterically inhibited by phosphoenolpyruvate. Its function is as follows. Catalyzes the phosphorylation of D-fructose 6-phosphate to fructose 1,6-bisphosphate by ATP, the first committing step of glycolysis. This chain is ATP-dependent 6-phosphofructokinase, found in Sulfurimonas denitrificans (strain ATCC 33889 / DSM 1251) (Thiomicrospira denitrificans (strain ATCC 33889 / DSM 1251)).